We begin with the raw amino-acid sequence, 1238 residues long: Protein MMS22-like (1238 aa).

This sequence belongs to the MMS22 family. MMS22L subfamily. In terms of assembly, component of the MMS22L-TONSL complex, a complex at least composed of MMS22L and TONSL/NFKBIL2. Interacts with RAD51; interaction is direct. In terms of processing, degraded by the ubiquitin-proteasome system upon replication stress.

Its subcellular location is the nucleus. The protein localises to the chromosome. In terms of biological role, component of the MMS22L-TONSL complex, a complex that promotes homologous recombination-mediated repair of double-strand breaks (DSBs) at stalled or collapsed replication forks. The MMS22L-TONSL complex is required to maintain genome integrity during DNA replication. It mediates the assembly of RAD51 filaments on single-stranded DNA (ssDNA): the MMS22L-TONSL complex is recruited to DSBs following histone replacement by histone chaperones and eviction of the replication protein A complex (RPA/RP-A) from DSBs. Following recruitment to DSBs, the TONSL-MMS22L complex promotes recruitment of RAD51 filaments and subsequent homologous recombination. Within the complex, MMS22L acts by binding ssDNA. This is Protein MMS22-like (Mms22l) from Mus musculus (Mouse).